The primary structure comprises 269 residues: Large ribosomal subunit protein uL3m (269 aa).

The N-terminal 19 residues, 1-19 (MSKFLQGSIFSISKLHVRY), are a transit peptide targeting the mitochondrion.

The protein belongs to the universal ribosomal protein uL3 family. As to quaternary structure, component of the mitochondrial large ribosomal subunit (mt-LSU). Mature yeast 74S mitochondrial ribosomes consist of a small (37S) and a large (54S) subunit. The 37S small subunit contains a 15S ribosomal RNA (15S mt-rRNA) and 34 different proteins. The 54S large subunit contains a 21S rRNA (21S mt-rRNA) and 46 different proteins.

It localises to the mitochondrion. In terms of biological role, component of the mitochondrial ribosome (mitoribosome), a dedicated translation machinery responsible for the synthesis of mitochondrial genome-encoded proteins, including at least some of the essential transmembrane subunits of the mitochondrial respiratory chain. The mitoribosomes are attached to the mitochondrial inner membrane and translation products are cotranslationally integrated into the membrane. The polypeptide is Large ribosomal subunit protein uL3m (MRPL9) (Saccharomyces cerevisiae (strain ATCC 204508 / S288c) (Baker's yeast)).